We begin with the raw amino-acid sequence, 328 residues long: Stress response kinase A (328 aa).

The active-site Proton acceptor is Asp201. Asn206 and Asp217 together coordinate Mg(2+). The active site involves Asp217.

This sequence belongs to the SrkA/RdoA protein kinase family. Monomer. It depends on Mg(2+) as a cofactor.

It is found in the cytoplasm. The enzyme catalyses L-seryl-[protein] + ATP = O-phospho-L-seryl-[protein] + ADP + H(+). The catalysed reaction is L-threonyl-[protein] + ATP = O-phospho-L-threonyl-[protein] + ADP + H(+). Functionally, a protein kinase that phosphorylates Ser and Thr residues. Probably acts to suppress the effects of stress linked to accumulation of reactive oxygen species. Probably involved in the extracytoplasmic stress response. Also has a role in LPS synthesis, through regulation of the galETK expression. Its function is as follows. A protein kinase that phosphorylates Ser and Thr residues. Probably acts to suppress the effects of stress linked to accumulation of reactive oxygen species. Probably involved in the extracytoplasmic stress response. The chain is Stress response kinase A from Shigella flexneri.